The sequence spans 469 residues: 2-oxoisovalerate dehydrogenase subunit beta, mitochondrial (469 aa).

A mitochondrion-targeting transit peptide spans 1–40; sequence MKRSTVVIRPSARALSRQASSQSFLLARSSALTSRQRRLY. Tyr167 is a thiamine diphosphate binding site. K(+) contacts are provided by Gly194, Leu196, and Thr197.

As to quaternary structure, heterotetramer of 2 alpha and 2 beta chains. It depends on thiamine diphosphate as a cofactor.

It localises to the mitochondrion matrix. It carries out the reaction N(6)-[(R)-lipoyl]-L-lysyl-[protein] + 3-methyl-2-oxobutanoate + H(+) = N(6)-[(R)-S(8)-2-methylpropanoyldihydrolipoyl]-L-lysyl-[protein] + CO2. Functionally, the branched-chain alpha-keto dehydrogenase complex catalyzes the overall conversion of alpha-keto acids to acyl-CoA and CO(2). It contains multiple copies of three enzymatic components: branched-chain alpha-keto acid decarboxylase (E1), lipoamide acyltransferase (E2) and lipoamide dehydrogenase (E3). The polypeptide is 2-oxoisovalerate dehydrogenase subunit beta, mitochondrial (Chaetomium thermophilum (strain DSM 1495 / CBS 144.50 / IMI 039719) (Thermochaetoides thermophila)).